The sequence spans 371 residues: DNA replication and repair protein RecF (371 aa).

Residue 30 to 37 (GANAQGKT) coordinates ATP.

Belongs to the RecF family.

It is found in the cytoplasm. Its function is as follows. The RecF protein is involved in DNA metabolism; it is required for DNA replication and normal SOS inducibility. RecF binds preferentially to single-stranded, linear DNA. It also seems to bind ATP. This Lacticaseibacillus paracasei (strain ATCC 334 / BCRC 17002 / CCUG 31169 / CIP 107868 / KCTC 3260 / NRRL B-441) (Lactobacillus paracasei) protein is DNA replication and repair protein RecF.